The chain runs to 862 residues: Protein translocase subunit SecA (862 aa).

Residues Gln-88, 106 to 110 (GEGKT), and Asp-506 each bind ATP. Zn(2+) contacts are provided by Cys-839, Cys-841, Cys-850, and His-851.

This sequence belongs to the SecA family. In terms of assembly, monomer and homodimer. Part of the essential Sec protein translocation apparatus which comprises SecA, SecYEG and auxiliary proteins SecDF-YajC and YidC. It depends on Zn(2+) as a cofactor.

It localises to the cell inner membrane. Its subcellular location is the cytoplasm. The enzyme catalyses ATP + H2O + cellular proteinSide 1 = ADP + phosphate + cellular proteinSide 2.. Its function is as follows. Part of the Sec protein translocase complex. Interacts with the SecYEG preprotein conducting channel. Has a central role in coupling the hydrolysis of ATP to the transfer of proteins into and across the cell membrane, serving as an ATP-driven molecular motor driving the stepwise translocation of polypeptide chains across the membrane. The protein is Protein translocase subunit SecA of Campylobacter jejuni subsp. jejuni serotype O:2 (strain ATCC 700819 / NCTC 11168).